Consider the following 132-residue polypeptide: Large ribosomal subunit protein uL14 (132 aa).

It belongs to the universal ribosomal protein uL14 family. Part of the 50S ribosomal subunit. Forms a cluster with proteins L3 and L24e, part of which may contact the 16S rRNA in 2 intersubunit bridges.

Its function is as follows. Binds to 23S rRNA. Forms part of two intersubunit bridges in the 70S ribosome. This chain is Large ribosomal subunit protein uL14, found in Methanococcus maripaludis (strain C5 / ATCC BAA-1333).